A 371-amino-acid polypeptide reads, in one-letter code: Macronuclear solute carrier homolog CR-MSC (371 aa).

Solcar repeat units follow at residues 16-111, 120-208, and 215-304; these read RMNY…FYDK, ARPD…CKEN, and PHWI…LSQF. 6 helical membrane passes run 22–42, 89–109, 126–146, 184–204, 221–241, and 281–301; these read FAAANVIALITHAATQPLDMV, TFFFRTVCYTTARVTAFGYFY, VAAGVLGGFIAGVVTNPIDIV, AGANGFKLAAICSSMTNIYDW, LWGTAVAVAIGTVVSMPFDMI, and FGSFYAGGEAYFLRLFLICYL.

Belongs to the mitochondrial carrier (TC 2.A.29) family.

The protein localises to the membrane. The sequence is that of Macronuclear solute carrier homolog CR-MSC from Oxytricha fallax.